The primary structure comprises 921 residues: Probable dipeptidyl-aminopeptidase B (921 aa).

Disordered regions lie at residues 1–33 (MAGH…TAST) and 45–66 (VAAN…RGER). The Cytoplasmic segment spans residues 1-109 (MAGHPEENAQ…NKSVDKKLRR (109 aa)). Residues 10–22 (QLLSTEQESMSRN) show a composition bias toward polar residues. Over residues 23–33 (SSDSVASTAST) the composition is skewed to low complexity. The helical; Signal-anchor for type II membrane protein transmembrane segment at 110–130 (LIWIIGGVFIGAWVLALFIFL) threads the bilayer. The Vacuolar portion of the chain corresponds to 131-921 (GKQAYKHSSE…VPLEIDAAKV (791 aa)). The segment at 138–157 (SSESPHDPQATSSRGSGKKV) is disordered. Asparagine 362 carries N-linked (GlcNAc...) asparagine glycosylation. Serine 768 serves as the catalytic Charge relay system. An N-linked (GlcNAc...) asparagine glycan is attached at asparagine 822. Catalysis depends on charge relay system residues aspartate 845 and histidine 878.

It belongs to the peptidase S9B family.

The protein localises to the vacuole membrane. The catalysed reaction is Release of an N-terminal dipeptide, Xaa-Yaa-|-Zaa-, from a polypeptide, preferentially when Yaa is Pro, provided Zaa is neither Pro nor hydroxyproline.. Functionally, type IV dipeptidyl-peptidase which removes N-terminal dipeptides sequentially from polypeptides having unsubstituted N-termini provided that the penultimate residue is proline. The polypeptide is Probable dipeptidyl-aminopeptidase B (dapB) (Botryotinia fuckeliana (strain B05.10) (Noble rot fungus)).